We begin with the raw amino-acid sequence, 398 residues long: NADH-quinone oxidoreductase subunit D (398 aa).

This sequence belongs to the complex I 49 kDa subunit family. NDH-1 is composed of 14 different subunits. Subunits NuoB, C, D, E, F, and G constitute the peripheral sector of the complex.

The protein resides in the cell inner membrane. It carries out the reaction a quinone + NADH + 5 H(+)(in) = a quinol + NAD(+) + 4 H(+)(out). Its function is as follows. NDH-1 shuttles electrons from NADH, via FMN and iron-sulfur (Fe-S) centers, to quinones in the respiratory chain. The immediate electron acceptor for the enzyme in this species is believed to be ubiquinone. Couples the redox reaction to proton translocation (for every two electrons transferred, four hydrogen ions are translocated across the cytoplasmic membrane), and thus conserves the redox energy in a proton gradient. The protein is NADH-quinone oxidoreductase subunit D of Bradyrhizobium diazoefficiens (strain JCM 10833 / BCRC 13528 / IAM 13628 / NBRC 14792 / USDA 110).